A 258-amino-acid chain; its full sequence is Flagellin B3 (258 aa).

Residues 1–8 (MRFLKKRG) constitute a propeptide that is removed on maturation.

The protein belongs to the archaeal flagellin family.

The protein localises to the archaeal flagellum. In terms of biological role, flagellin is the subunit protein which polymerizes to form the filaments of archaeal flagella. In Thermococcus kodakarensis (strain ATCC BAA-918 / JCM 12380 / KOD1) (Pyrococcus kodakaraensis (strain KOD1)), this protein is Flagellin B3 (flaB3).